The primary structure comprises 230 residues: Broad specificity amino-acid racemase YgeA (230 aa).

Substrate contacts are provided by residues Met-10, Gln-52, and 83–85; that span reads TNT. Catalysis depends on Thr-83, which acts as the Proton donor. Catalysis depends on Cys-197, which acts as the Proton acceptor. Residue 198 to 199 participates in substrate binding; it reads TE.

This sequence belongs to the aspartate/glutamate racemases family.

The enzyme catalyses an L-alpha-amino acid = a D-alpha-amino acid. It catalyses the reaction L-homoserine = D-homoserine. In terms of biological role, amino-acid racemase able to utilize a broad range of substrates. Highest activity is observed with L-homoserine and D-homoserine. Has tenfold lower activity against L-methionine, L-leucine, L-valine and L-histidine. Has low activity with L-norvaline, L-asparagine, D-methionine, L-aminobutyric acid, L-isoleucine, L-serine, L-norleucine, L-alanine, L-glutamine, LL-diaminopimelic acid and L-phenylalanine. Has no activity against ten L-amino acids (Thr, Glu, Asp, Arg, Lys, Tyr, Trp, Orn, Cit and Aad). D-amino acids might be used as components of peptidoglycan and/or be involved in peptidoglycan metabolism and remodeling. The protein is Broad specificity amino-acid racemase YgeA (ygeA) of Escherichia coli (strain K12).